A 661-amino-acid chain; its full sequence is Probable urea active transporter 3 (661 aa).

The next 15 membrane-spanning stretches (helical) occupy residues 13–33, 56–76, 86–106, 132–152, 165–185, 197–217, 251–271, 288–308, 352–372, 397–417, 419–439, 454–474, 495–515, 556–576, and 591–611; these read GIVIGLGFAFAIVMILVTYVL, GLISSAVVSSWTWPGTLLTSA, GSMWYSFAFTVQITFFTVIAL, AVFLFYALGTNIIVSAMLLLG, VVAAGFLLPLGVWLYTVSGGL, VIVYIVILITLFVAYTSSVHI, AVFVGWNIVIGGFATVFCDPS, YFAGGLAWLIVPWAMGSAAAL, AGVLILFMASTSATSAELVAF, VTHVFVTIFAVCMGALAVLFN, IGITISWIITFIGIALGPAVF, GMIIGCPMGSITGVVCWVGSC, VGNFTGLFSGLIYIVLISYFF, IGIFVSWIIFFILVIIVPLPM, and WIIVIIIWTLIAALYITFYPL.

Belongs to the sodium:solute symporter (SSF) (TC 2.A.21) family.

It localises to the membrane. The protein localises to the golgi apparatus membrane. Functionally, involved in active transport of urea. The sequence is that of Probable urea active transporter 3 (dur3-3) from Schizosaccharomyces pombe (strain 972 / ATCC 24843) (Fission yeast).